A 217-amino-acid polypeptide reads, in one-letter code: Zinc finger CCHC-type and RNA-binding motif-containing protein 1 (217 aa).

The region spanning 10-88 (STVYVSNLPF…RVIKASIAID (79 aa)) is the RRM domain. A CCHC-type zinc finger spans residues 105-122 (SKCYECGESGHLSYACPK). The disordered stretch occupies residues 120 to 217 (CPKNMLGERE…YFSDEEELSD (98 aa)). The segment covering 145-163 (PEEEIEEVEESEDEGEDPA) has biased composition (acidic residues). 3 positions are modified to phosphoserine: Ser155, Ser210, and Ser216.

In terms of assembly, component of the U11/U12 snRNPs that are part of the U12-type spliceosome. Interacts with ZRSR1.

Its subcellular location is the nucleus. The protein resides in the nucleoplasm. The polypeptide is Zinc finger CCHC-type and RNA-binding motif-containing protein 1 (ZCRB1) (Bos taurus (Bovine)).